The sequence spans 119 residues: Large ribosomal subunit protein uL18 (119 aa).

This sequence belongs to the universal ribosomal protein uL18 family. Part of the 50S ribosomal subunit; part of the 5S rRNA/L5/L18/L25 subcomplex. Contacts the 5S and 23S rRNAs.

Its function is as follows. This is one of the proteins that bind and probably mediate the attachment of the 5S RNA into the large ribosomal subunit, where it forms part of the central protuberance. The sequence is that of Large ribosomal subunit protein uL18 from Oceanobacillus iheyensis (strain DSM 14371 / CIP 107618 / JCM 11309 / KCTC 3954 / HTE831).